The sequence spans 175 residues: Myosin regulatory light chain 2, atrial isoform (175 aa).

At alanine 2 the chain carries N-acetylalanine. Residues serine 22 and serine 23 each carry the phosphoserine modification. 3 EF-hand domains span residues 32–67 (AQIQ…LGKV), 102–137 (DPEE…QADK), and 138–173 (FSPA…GDEK). Ca(2+) contacts are provided by aspartate 45, asparagine 47, aspartate 49, and aspartate 56.

As to quaternary structure, myosin is a hexamer of 2 heavy chains and 4 light chains. As to expression, predominantly expressed in adult atrial muscle.

The polypeptide is Myosin regulatory light chain 2, atrial isoform (MYL7) (Homo sapiens (Human)).